Here is a 194-residue protein sequence, read N- to C-terminus: Peptidyl-tRNA hydrolase (194 aa).

Position 17 (Tyr17) interacts with tRNA. His22 functions as the Proton acceptor in the catalytic mechanism. Residues Phe68, Asn70, and Asn116 each coordinate tRNA.

It belongs to the PTH family. Monomer.

The protein resides in the cytoplasm. It catalyses the reaction an N-acyl-L-alpha-aminoacyl-tRNA + H2O = an N-acyl-L-amino acid + a tRNA + H(+). In terms of biological role, hydrolyzes ribosome-free peptidyl-tRNAs (with 1 or more amino acids incorporated), which drop off the ribosome during protein synthesis, or as a result of ribosome stalling. Functionally, catalyzes the release of premature peptidyl moieties from peptidyl-tRNA molecules trapped in stalled 50S ribosomal subunits, and thus maintains levels of free tRNAs and 50S ribosomes. The chain is Peptidyl-tRNA hydrolase from Shewanella halifaxensis (strain HAW-EB4).